The primary structure comprises 805 residues: Na(+)/H(+) antiporter subunit A1 (805 aa).

20 helical membrane passes run 1 to 21 (MSLL…IPFV), 30 to 50 (LGWF…SYIS), 79 to 99 (LGLL…LYSI), 117 to 137 (LFMG…LYLF), 166 to 186 (MLVT…LSIA), 201 to 221 (EIQT…GAMT), 226 to 246 (FPFY…SAYL), 265 to 285 (IFAV…ITLF), 300 to 320 (ILAF…GVGA), 337 to 357 (FTAA…LFMI), 377 to 397 (LTIM…MAGI), 427 to 447 (LGIL…VYSI), 480 to 500 (ILAI…GSII), 531 to 551 (LGIY…IYLL), 591 to 611 (LVII…VTPF), 623 to 643 (PFEL…IFAK), 646 to 666 (LFSI…FIFF), 671 to 691 (LALT…LCFY), 707 to 727 (LVNI…GLIA), and 766 to 786 (TLFE…MIKL).

Belongs to the CPA3 antiporters (TC 2.A.63) subunit A family. As to quaternary structure, may form a heterooligomeric complex that consists of seven subunits: mnhA1, mnhB1, mnhC1, mnhD1, mnhE1, mnhF1 and mnhG1.

The protein resides in the cell membrane. Its function is as follows. Mnh complex is a Na(+)/H(+) antiporter involved in Na(+) excretion. In Staphylococcus saprophyticus subsp. saprophyticus (strain ATCC 15305 / DSM 20229 / NCIMB 8711 / NCTC 7292 / S-41), this protein is Na(+)/H(+) antiporter subunit A1 (mnhA1).